Reading from the N-terminus, the 842-residue chain is Netrin receptor UNC5A (842 aa).

The first 25 residues, 1–25, serve as a signal peptide directing secretion; it reads MAVRPGLWPALLGIVLAAWLRGSGA. The Extracellular portion of the chain corresponds to 26-306; sequence QQSATVANPV…ASGPEDVALY (281 aa). In terms of domain architecture, Ig-like spans 44–141; that stretch reads PHFLVEPEDV…SGTTKSQKAY (98 aa). 3 disulfides stabilise this stretch: C65/C126, C77/C124, and C170/C221. N-linked (GlcNAc...) asparagine glycosylation is found at N107 and N218. The Ig-like C2-type domain occupies 155 to 234; sequence PLAKEVSLEQ…NIVARRRSAS (80 aa). The TSP type-1 domain occupies 242–294; the sequence is DGSWSPWSKWSACGLDCTHWRSRECSDPAPRNGGEECQGTDLDTRNCTSDLCV. W245, W248, and W251 each carry a C-linked (Man) tryptophan glycan. 3 disulfides stabilise this stretch: C254–C288, C258–C293, and C266–C278. Residue N287 is glycosylated (N-linked (GlcNAc...) asparagine). The chain crosses the membrane as a helical span at residues 307–327; that stretch reads VGLIAVAVCLVLLLLVLILVY. The Cytoplasmic segment spans residues 328-842; that stretch reads CRKKEGLDSD…GLFTVSEAEC (515 aa). Residues 441–584 enclose the ZU5 domain; the sequence is NMTYGTFNFL…LGRFALVGEA (144 aa). An interaction with DCC region spans residues 605 to 623; it reads SLEYNIRVYCLHDTHDALK. Residues 761–841 enclose the Death domain; the sequence is QKIISSLDPP…AGLFTVSEAE (81 aa).

Belongs to the unc-5 family. As to quaternary structure, homodimer and homooligomer. Interacts with the cytoplasmic part of DCC. Interacts with MAGED1. Interacts with PRKCABP, possibly mediating some interaction with PKC. Interacts (via extracellular domain) with FLRT2 (via extracellular domain). Interacts (via extracellular domain) with FLRT3 (via extracellular domain). Phosphorylated on cytoplasmic tyrosine residues. Phosphorylated by PKC in vitro. Post-translationally, proteolytically cleaved by caspases during apoptosis. The cleavage does not take place when the receptor is associated with netrin ligand. Its cleavage by caspases is required to induce apoptosis. In terms of processing, the two extracellular TSRs of UNC5A contain WxxWxxWxxC motifs that can be C-mannosylated on all tryptophans. DPY19L1 preferentially mannosylates the first two tryptophans and DPY19L3 prefers the third. C-mannosylation by DPY19L1 is required for transport of UNC5A from the endoplasmic reticulum to the cell surface.

The protein resides in the cell membrane. The protein localises to the membrane raft. It is found in the cell projection. It localises to the neuron projection. Functionally, receptor for netrin required for axon guidance. Functions in the netrin signaling pathway and promotes neurite outgrowth in response to NTN1. Mediates axon repulsion of neuronal growth cones in the developing nervous system in response to netrin. Axon repulsion in growth cones may be mediated by its association with DCC that may trigger signaling for repulsion. It also acts as a dependence receptor required for apoptosis induction when not associated with netrin ligand. In Homo sapiens (Human), this protein is Netrin receptor UNC5A (UNC5A).